The sequence spans 401 residues: Sodium/glutamate symporter (401 aa).

Residues 1–6 are Periplasmic-facing; sequence MFHLDT. A helical membrane pass occupies residues 7-24; the sequence is LATLVAATLTLLLGRKLV. Residues 25–32 are Cytoplasmic-facing; sequence HSVSFLKK. Residues 33 to 52 traverse the membrane as a helical segment; it reads YTIPEPVAGGLLVALALLVL. The Periplasmic segment spans residues 53–69; sequence KKSMGWEVNFDMSLRDP. Residues 70 to 87 traverse the membrane as a helical segment; that stretch reads LMLAFFATIGLNANIASL. Over 88-93 the chain is Cytoplasmic; that stretch reads RAGGRV. The helical transmembrane segment at 94 to 116 threads the bilayer; the sequence is VGIFLIVVVGLLVMQNAIGIGMA. The Periplasmic segment spans residues 117–156; it reads SLLGLDPLMGLLAGSITLSGGHGTGAAWSKLFIERYGFTN. Residues 157-179 traverse the membrane as a helical segment; sequence ATEVAMACATFGLVLGGLIGGPV. Over 180–212 the chain is Cytoplasmic; sequence ARYLVKHSTTPNGIPDDQEVPTAFEKPDVGRMI. The chain crosses the membrane as a helical span at residues 213–235; that stretch reads TSLVLIETIALIAICLTVGKIVA. The Periplasmic portion of the chain corresponds to 236–244; the sequence is QLLAGTAFE. Residues 245–267 traverse the membrane as a helical segment; it reads LPTFVCVLFVGVILSNGLSIMGF. Over 268–276 the chain is Cytoplasmic; that stretch reads YRVFERAVS. Residues 277–292 traverse the membrane as a helical segment; the sequence is VLGNVSLSLFLAMALM. Over 293 to 301 the chain is Periplasmic; it reads GLKLWELAS. A helical membrane pass occupies residues 302–324; that stretch reads LALPMLAILVVQTIFMALYAIFV. Over 325–367 the chain is Cytoplasmic; the sequence is TWRMMGKNYDAAVLAAGHCGFGLGATPTAIANMQAITERFGPS. A helical transmembrane segment spans residues 368-390; the sequence is HMAFLVVPMVGAFFIDIVNALVI. The Periplasmic segment spans residues 391-401; it reads KLYLMLPIFAG.

The protein belongs to the glutamate:Na(+) symporter (ESS) (TC 2.A.27) family.

It localises to the cell inner membrane. With respect to regulation, inhibited by the uncoupler carbonylcyanide m-chlorophenylhydrazone (CCCP) and the ionophore monensin. Its function is as follows. Catalyzes the sodium-dependent, binding-protein-independent transport of glutamate. The sequence is that of Sodium/glutamate symporter from Escherichia coli (strain K12).